The chain runs to 462 residues: L-seryl-tRNA(Sec) selenium transferase (462 aa).

Lysine 293 bears the N6-(pyridoxal phosphate)lysine mark.

Belongs to the SelA family. Pyridoxal 5'-phosphate is required as a cofactor.

Its subcellular location is the cytoplasm. It carries out the reaction L-seryl-tRNA(Sec) + selenophosphate + H(+) = L-selenocysteinyl-tRNA(Sec) + phosphate. Its pathway is aminoacyl-tRNA biosynthesis; selenocysteinyl-tRNA(Sec) biosynthesis; selenocysteinyl-tRNA(Sec) from L-seryl-tRNA(Sec) (bacterial route): step 1/1. Functionally, converts seryl-tRNA(Sec) to selenocysteinyl-tRNA(Sec) required for selenoprotein biosynthesis. In Clostridium botulinum (strain Loch Maree / Type A3), this protein is L-seryl-tRNA(Sec) selenium transferase.